The sequence spans 896 residues: Translation initiation factor IF-2 (896 aa).

The span at valine 93–tryptophan 219 shows a compositional bias: basic and acidic residues. Residues valine 93–lysine 307 are disordered. A compositionally biased stretch (basic residues) spans glycine 256–asparagine 271. Residues lysine 272–alanine 285 are compositionally biased toward basic and acidic residues. In terms of domain architecture, tr-type G spans proline 395–lysine 564. Positions glycine 404–threonine 411 are G1. Glycine 404–threonine 411 contacts GTP. Residues glycine 429 to histidine 433 form a G2 region. The tract at residues aspartate 450–glycine 453 is G3. GTP-binding positions include aspartate 450–histidine 454 and asparagine 504–aspartate 507. The G4 stretch occupies residues asparagine 504–aspartate 507. The segment at serine 540 to lysine 542 is G5.

Belongs to the TRAFAC class translation factor GTPase superfamily. Classic translation factor GTPase family. IF-2 subfamily.

The protein localises to the cytoplasm. Functionally, one of the essential components for the initiation of protein synthesis. Protects formylmethionyl-tRNA from spontaneous hydrolysis and promotes its binding to the 30S ribosomal subunits. Also involved in the hydrolysis of GTP during the formation of the 70S ribosomal complex. The protein is Translation initiation factor IF-2 of Klebsiella pneumoniae (strain 342).